We begin with the raw amino-acid sequence, 161 residues long: Phosphopantetheine adenylyltransferase (161 aa).

S10 is a substrate binding site. ATP is bound by residues 10-11 (SF) and H18. The substrate site is built by K42, L74, and R88. ATP-binding positions include 88–89 (RG), E99, and 124–130 (YSFLSSS).

It belongs to the bacterial CoaD family. In terms of assembly, homohexamer. Mg(2+) serves as cofactor.

It is found in the cytoplasm. The enzyme catalyses (R)-4'-phosphopantetheine + ATP + H(+) = 3'-dephospho-CoA + diphosphate. Its pathway is cofactor biosynthesis; coenzyme A biosynthesis; CoA from (R)-pantothenate: step 4/5. Reversibly transfers an adenylyl group from ATP to 4'-phosphopantetheine, yielding dephospho-CoA (dPCoA) and pyrophosphate. In Bacillus subtilis (strain 168), this protein is Phosphopantetheine adenylyltransferase.